The sequence spans 350 residues: uncharacterized protein (350 aa).

3 disordered regions span residues 1-21 (MDSF…SSLN), 237-266 (NSDV…PISP), and 278-298 (EMST…KKRT). Polar residues-rich tracts occupy residues 10–21 (KPTTATSNSSLN) and 246–259 (EDSS…TKPS). Basic residues predominate over residues 287-298 (SRSRTPSSKKRT).

Its subcellular location is the nucleus. This is an uncharacterized protein from Schizosaccharomyces pombe (strain 972 / ATCC 24843) (Fission yeast).